We begin with the raw amino-acid sequence, 824 residues long: E3 ubiquitin-protein ligase TRIM71 (824 aa).

An RING-type zinc finger spans residues 23 to 93 (CPLCKELCGC…PLKLRCPTCD (71 aa)). Residues 37 to 56 (SSNSSTSSSSSQTSNSSSTS) form a disordered region. The B box-type 1; atypical zinc-finger motif lies at 147-194 (LSDPQCSSCDEGNPATSHCLDCQEYLCDNCVRAHQRVRLTKDHFIEGL). 8 residues coordinate Zn(2+): C152, C155, C176, H180, C234, H237, C257, and H262. A B box-type 2 zinc finger spans residues 229–270 (ERMDFCQHHDDAVLRFFCDSCTVPICRECSLGRHAGHSFTYL). Residues 293 to 321 (QAIQLSIEKAQAIAEQVELKAKVVQSEVK) are a coiled coil. The stretch at 435 to 536 (SSGAFATASK…IEGSPFKVMV (102 aa)) is one Filamin repeat. 6 NHL repeats span residues 549–592 (MASF…FKPC), 596–639 (HHKF…FTFD), 643–686 (LLKF…FGPD), 690–733 (LNKY…IRPD), 737–780 (ARFL…FEPN), and 784–824 (LCKF…ILMF).

Belongs to the TRIM/RBCC family.

The protein resides in the cytoplasm. The protein localises to the P-body. It catalyses the reaction S-ubiquitinyl-[E2 ubiquitin-conjugating enzyme]-L-cysteine + [acceptor protein]-L-lysine = [E2 ubiquitin-conjugating enzyme]-L-cysteine + N(6)-ubiquitinyl-[acceptor protein]-L-lysine.. It participates in protein modification; protein ubiquitination. E3 ubiquitin-protein ligase that cooperates with the microRNAs (miRNAs) machinery and promotes embryonic stem cells proliferation and maintenance. Binds to miRNAs and participates in post-transcriptional repression of transcripts. Required to maintain proliferation and prevent premature differentiation of neural progenitor cells during early neural development. This chain is E3 ubiquitin-protein ligase TRIM71 (trim71), found in Danio rerio (Zebrafish).